The sequence spans 414 residues: 3-oxoacyl-[acyl-carrier-protein] synthase 2 (414 aa).

Residues 3-413 (KRRVVVTGMG…GTNGSLIFKR (411 aa)) form the Ketosynthase family 3 (KS3) domain. Catalysis depends on for beta-ketoacyl synthase activity residues Cys-164, His-304, and His-342.

The protein belongs to the thiolase-like superfamily. Beta-ketoacyl-ACP synthases family. In terms of assembly, homodimer.

It catalyses the reaction a fatty acyl-[ACP] + malonyl-[ACP] + H(+) = a 3-oxoacyl-[ACP] + holo-[ACP] + CO2. It carries out the reaction (9Z)-hexadecenoyl-[ACP] + malonyl-[ACP] + H(+) = 3-oxo-(11Z)-octadecenoyl-[ACP] + holo-[ACP] + CO2. It functions in the pathway lipid metabolism; fatty acid biosynthesis. Involved in the type II fatty acid elongation cycle. Catalyzes the elongation of a wide range of acyl-ACP by the addition of two carbons from malonyl-ACP to an acyl acceptor. Can efficiently catalyze the conversion of palmitoleoyl-ACP (cis-hexadec-9-enoyl-ACP) to cis-vaccenoyl-ACP (cis-octadec-11-enoyl-ACP), an essential step in the thermal regulation of fatty acid composition. The polypeptide is 3-oxoacyl-[acyl-carrier-protein] synthase 2 (fabF) (Vibrio cholerae serotype O1 (strain ATCC 39315 / El Tor Inaba N16961)).